The following is a 227-amino-acid chain: Probable GTP-binding protein EngB (227 aa).

The EngB-type G domain occupies 30-219 (KKPQIIVVGR…MVKINKNVNE (190 aa)). GTP contacts are provided by residues 38-45 (GRSNVGKS), 63-67 (GVTLK), 80-83 (DLPG), 160-163 (NKMD), and 197-199 (IGI). 2 residues coordinate Mg(2+): Ser-45 and Thr-65.

Belongs to the TRAFAC class TrmE-Era-EngA-EngB-Septin-like GTPase superfamily. EngB GTPase family. Mg(2+) is required as a cofactor.

In terms of biological role, necessary for normal cell division and for the maintenance of normal septation. The chain is Probable GTP-binding protein EngB from Methanococcus aeolicus (strain ATCC BAA-1280 / DSM 17508 / OCM 812 / Nankai-3).